Consider the following 399-residue polypeptide: Syndecan (399 aa).

An N-terminal signal peptide occupies residues 1–28 (MKPKQKISVEPLLLVAILIGVLVAATHA). Residues 28–319 (AQDQKSVKPS…TKGIDHRPNG (292 aa)) form a disordered region. Topologically, residues 29-340 (QDQKSVKPSA…TSSFFSQPGI (312 aa)) are extracellular. The segment covering 36–46 (PSAAAPSAAAS) has biased composition (low complexity). Residue S62 is glycosylated (O-linked (Xyl...) (glycosaminoglycan) serine). Residues 67 to 77 (GIHEDLEKDPD) show a composition bias toward basic and acidic residues. 3 O-linked (Xyl...) (glycosaminoglycan) serine glycosylation sites follow: S79, S81, and S110. Positions 99–116 (SHNTRISQSSNSGINTAH) are enriched in polar residues. Positions 117-172 (TPTQTSSTIPTTSTSTPMPTTTPTATTPASTTTAAATQISSFANSSSTTTTTLAPT) are enriched in low complexity. N160 is a glycosylation site (N-linked (GlcNAc...) asparagine). A compositionally biased stretch (acidic residues) spans 191-214 (TESSGDGIDADAEDDDEDDGDDKD). O-linked (Xyl...) (glycosaminoglycan) serine glycosylation is present at S194. Positions 215–226 (YDYNKELDKEID) are enriched in basic and acidic residues. Residues 253 to 270 (DEIDVDGGDEDDNGDSDI) are compositionally biased toward acidic residues. Over residues 299 to 309 (PNTNVNSQPSD) the composition is skewed to polar residues. A helical membrane pass occupies residues 341–365 (LAAVIGGAVVGLLCAILVVMFIVYR). Residues 366 to 399 (MRKKDEGSYALDEPKRSPANNSYAKNANNREFYA) lie on the Cytoplasmic side of the membrane. Residues 373–399 (SYALDEPKRSPANNSYAKNANNREFYA) form a disordered region. Over residues 383–399 (PANNSYAKNANNREFYA) the composition is skewed to polar residues.

This sequence belongs to the syndecan proteoglycan family. In 13-16 hours embryos, expressed in lymph glands, peripheral and central nervous system and basal surfaces of gut epithelia. Sdc and robo are coexpressed in domains adjacent to slit; in tracheal pits and midline glia cells.

The protein localises to the membrane. Its function is as follows. Cell surface proteoglycan that bears heparan sulfate. Required for axonal and myotube guidance, is a necessary component of slit/robo signaling and is required in the slit target cells. The protein is Syndecan (Sdc) of Drosophila melanogaster (Fruit fly).